The primary structure comprises 185 residues: MAAYNKADLERRMKGAVESLKSDFSGLRTGRASTSLLDPVTVDVYGANMPLNQVATVSVPEPRMITVQVWDKSNVTPVDKAIRSAGLGLNPVVDGQMLRLPIPDLTEERRKELAKLVGQYSEKARIAVRNVRRDGNDQIKQDEKKNEISEDEKKRFENEVQKLTDKTIADIDALAVHKEKEILGK.

The protein belongs to the RRF family.

It is found in the cytoplasm. Functionally, responsible for the release of ribosomes from messenger RNA at the termination of protein biosynthesis. May increase the efficiency of translation by recycling ribosomes from one round of translation to another. The protein is Ribosome-recycling factor of Zymomonas mobilis subsp. mobilis (strain ATCC 31821 / ZM4 / CP4).